The chain runs to 559 residues: Glycerol kinase (559 aa).

ADP is bound at residue threonine 20. ATP contacts are provided by threonine 20, serine 21, and serine 22. Residue threonine 20 participates in sn-glycerol 3-phosphate binding. Arginine 24 contacts ADP. Sn-glycerol 3-phosphate contacts are provided by arginine 94, glutamate 95, and tyrosine 148. 3 residues coordinate glycerol: arginine 94, glutamate 95, and tyrosine 148. A beta-D-fructose 1,6-bisphosphate-binding site is contributed by glycine 252. Aspartate 265 is a sn-glycerol 3-phosphate binding site. Residues aspartate 265 and glutamine 266 each coordinate glycerol. ADP is bound by residues threonine 287, glycine 332, glycine 433, and asparagine 437. ATP contacts are provided by threonine 287, glycine 332, and glycine 433. Position 501 (glutamate 501) interacts with Zn(2+). The chain crosses the membrane as a helical span at residues isoleucine 532–alanine 552.

It belongs to the FGGY kinase family.

The protein resides in the mitochondrion outer membrane. It is found in the nucleus. Its subcellular location is the cytoplasm. The protein localises to the cytosol. The enzyme catalyses glycerol + ATP = sn-glycerol 3-phosphate + ADP + H(+). Its pathway is polyol metabolism; glycerol degradation via glycerol kinase pathway; sn-glycerol 3-phosphate from glycerol: step 1/1. In terms of biological role, kinase that plays a key role in glycerol metabolism, catalyzing its phosphorylation to produce sn-glycerol 3-phosphate. Sn-glycerol 3-phosphate is a crucial intermediate in various metabolic pathways, such as the synthesis of glycerolipids and triglycerides, glycogenesis, glycolysis and gluconeogenesis. The sequence is that of Glycerol kinase from Bos taurus (Bovine).